A 1054-amino-acid chain; its full sequence is Proteoglycan 4 (1054 aa).

An N-terminal signal peptide occupies residues 1–24; that stretch reads MGWKILPVCLSLLLPVVLIQQVSS. SMB domains follow at residues 26-69 and 66-108; these read DLSS…PELS and PELS…EEVH. Cystine bridges form between cysteine 30–cysteine 34, cysteine 30–cysteine 46, cysteine 34–cysteine 64, cysteine 44–cysteine 46, cysteine 44–cysteine 57, cysteine 50–cysteine 56, cysteine 57–cysteine 64, cysteine 70–cysteine 74, cysteine 70–cysteine 86, cysteine 74–cysteine 104, cysteine 84–cysteine 86, cysteine 84–cysteine 97, cysteine 90–cysteine 96, and cysteine 97–cysteine 104. Asparagine 109 carries N-linked (GlcNAc...) asparagine glycosylation. Residues 110–125 show a composition bias toward low complexity; that stretch reads STSPSSKTAPTPAGAS. Positions 110–764 are disordered; sequence STSPSSKTAP…PLIPGPPVLF (655 aa). O-linked (GalNAc...) serine glycosylation is present at serine 135. A compositionally biased stretch (low complexity) spans 162–175; the sequence is QESSSSSSSSSSTI. Residues 188-200 show a composition bias toward basic and acidic residues; it reads ELQKNPNVKDNKK. The segment covering 229-238 has biased composition (pro residues); sequence TPPPPDPPTT. Residues threonine 237 and threonine 250 are each glycosylated (O-linked (GalNAc...) threonine). The span at 286 to 295 shows a compositional bias: low complexity; that stretch reads TTATNKQSSA. A glycan (O-linked (GalNAc...) threonine) is linked at threonine 301. Serine 302 carries O-linked (GalNAc...) serine glycosylation. A compositionally biased stretch (basic and acidic residues) spans 302 to 318; it reads SVKETRSAEKTSDKDVE. O-linked (GalNAc...) threonine glycosylation occurs at threonine 306. Residue serine 313 is glycosylated (O-linked (GalNAc...) serine). Residues 317–324 form a 1; approximate repeat; that stretch reads VEPTSTTP. The interval 317-618 is 37 X 8 AA repeats of K-X-P-X-P-T-T-X; it reads VEPTSTTPKN…TPKKPEPTTT (302 aa). Residues 319–328 are compositionally biased toward polar residues; sequence PTSTTPKNSA. The 2; approximate repeat unit spans residues 325-332; sequence KNSAPTTT. Serine 327 carries O-linked (GalNAc...) serine glycosylation. Over residues 329 to 339 the composition is skewed to low complexity; sequence PTTTKKPVTTT. Threonine 330, threonine 338, threonine 354, threonine 362, threonine 369, threonine 377, threonine 378, threonine 385, threonine 386, threonine 393, and threonine 394 each carry an O-linked (GalNAc...) threonine glycan. A 3; approximate repeat occupies 333 to 340; that stretch reads KKPVTTTK. A 4; approximate repeat occupies 349-356; the sequence is QEPEPTTA. Copy 5 of the repeat occupies 357–364; sequence KEPPPTTK. Over residues 364–399 the composition is skewed to basic and acidic residues; that stretch reads KKPEPTTRKEPEPTTPKEPEPTTPKEPEPTTPKEPE. The 6; approximate repeat unit spans residues 365-371; that stretch reads KPEPTTR. A run of 5 repeats spans residues 372-379, 380-387, 388-395, 396-403, and 404-411. The segment covering 400–426 has biased composition (pro residues); that stretch reads PTTPKEPPPTTKKPEPTTPKEPGPTTP. Residues 412–418 form a 12; approximate repeat; the sequence is KPEPTTP. 8 O-linked (GalNAc...) threonine glycosylation sites follow: threonine 416, threonine 417, threonine 424, threonine 432, threonine 433, threonine 440, threonine 441, and threonine 448. A run of 3 repeats spans residues 419–426, 427–434, and 435–442. Basic and acidic residues predominate over residues 427–550; sequence KEPEPTTTKE…PEPTTPKKPE (124 aa). A 16; approximate repeat occupies 443 to 450; it reads KEPESTTR. 21 repeat units span residues 451-458, 459-466, 467-474, 475-482, 483-490, 491-498, 499-506, 507-514, 515-522, 523-530, 531-538, 539-546, 547-554, 555-562, 563-570, 571-578, 579-586, 587-594, 595-602, 603-610, and 611-618. O-linked (GalNAc...) threonine glycosylation is found at threonine 472, threonine 480, threonine 481, threonine 488, threonine 489, threonine 496, threonine 497, threonine 504, threonine 505, threonine 512, threonine 520, threonine 521, threonine 528, and threonine 529. The span at 551–562 shows a compositional bias: pro residues; it reads PTTPKEPVPTTP. 7 O-linked (GalNAc...) threonine glycosylation sites follow: threonine 553, threonine 560, threonine 561, threonine 568, threonine 569, threonine 576, and threonine 577. Residues 563 to 614 are compositionally biased toward basic and acidic residues; the sequence is KEPEPTTPKEPEPTTPKEPEPTTRKEPEPTTPKEPEPTTPKEPEPTTPKKPE. O-linked (GalNAc...) threonine glycans are attached at residues threonine 592, threonine 600, and threonine 601. Residues 615-624 are compositionally biased toward low complexity; that stretch reads PTTTSPKTTT. Threonine 622, threonine 624, threonine 628, threonine 629, and threonine 692 each carry an O-linked (GalNAc...) threonine glycan. The segment covering 672–699 has biased composition (basic residues); the sequence is KPTKKPTKAPKKPTSTKKPKTPKTRKPK. A compositionally biased stretch (low complexity) spans 700–712; sequence TTPSPLKTTSATP. Positions 713 to 735 are enriched in polar residues; the sequence is ELNTTPLEVMLPTTTIPKQTPNP. Cysteine 795 and cysteine 1053 form a disulfide bridge. Hemopexin repeat units follow at residues 797–840 and 841–888; these read GKPV…VWGI and PSPI…FGGL. A glycan (N-linked (GlcNAc...) asparagine) is linked at asparagine 808. O-linked (GalNAc...) threonine glycosylation is present at threonine 810. A glycan (N-linked (GlcNAc...) asparagine) is linked at asparagine 938.

As to quaternary structure, homodimer; disulfide-linked. Post-translationally, N-glycosylated. O-glycosylated; contains glycosaminoglycan chondroitin sulfate and keratan sulfate. O-glycosylated with sialylated oligosaccharides which are predominantly represented by the monosialylated core type I structure, NeuNAcalpha2-3Galbeta1-3GalNAc, with smaller amounts of disialylated O-glycans. In terms of processing, the disulfide bond between Cys-795 and Cys-1053 is essential for protein cleavage. Post-translationally, proteolytically cleaved by cathepsin CTSG. Highly expressed in cartilage, bone and liver and weakly expressed in heart, brain and muscle. Expressed in the surface chondrocytes and in synovial intimal cells. Isoform B is expressed in bone, small intestine, muscle, testis, heart, liver and lung. Isoform C and isoform D are widely expressed.

The protein resides in the secreted. Functionally, plays a role in boundary lubrication within articulating joints. Prevents protein deposition onto cartilage from synovial fluid by controlling adhesion-dependent synovial growth and inhibiting the adhesion of synovial cells to the cartilage surface. In Mus musculus (Mouse), this protein is Proteoglycan 4 (Prg4).